Reading from the N-terminus, the 176-residue chain is Large ribosomal subunit protein eL20 (176 aa).

The protein belongs to the eukaryotic ribosomal protein eL20 family. In terms of assembly, component of the large ribosomal subunit.

The protein resides in the cytoplasm. Its function is as follows. Component of the large ribosomal subunit. The ribosome is a large ribonucleoprotein complex responsible for the synthesis of proteins in the cell. In Ictalurus punctatus (Channel catfish), this protein is Large ribosomal subunit protein eL20 (rpl18a).